Here is a 343-residue protein sequence, read N- to C-terminus: Endoglucanase C (343 aa).

Glu140 acts as the Proton donor in catalysis. Glu280 (nucleophile) is an active-site residue.

The protein belongs to the glycosyl hydrolase 5 (cellulase A) family.

It catalyses the reaction Endohydrolysis of (1-&gt;4)-beta-D-glucosidic linkages in cellulose, lichenin and cereal beta-D-glucans.. Its pathway is glycan metabolism; cellulose degradation. Functionally, this enzyme catalyzes the endohydrolysis of 1,4-beta-glucosidic linkages in cellulose, lichenin and cereal beta-D-glucans. The protein is Endoglucanase C (celC) of Acetivibrio thermocellus (strain ATCC 27405 / DSM 1237 / JCM 9322 / NBRC 103400 / NCIMB 10682 / NRRL B-4536 / VPI 7372) (Clostridium thermocellum).